Consider the following 357-residue polypeptide: Protein RecA (357 aa).

Position 67–74 (67–74 (GPESSGKT)) interacts with ATP. A disordered region spans residues 333 to 357 (NELTPATAGNSHDEDAFADEGNEEF). Acidic residues predominate over residues 348 to 357 (AFADEGNEEF).

The protein belongs to the RecA family.

The protein resides in the cytoplasm. Can catalyze the hydrolysis of ATP in the presence of single-stranded DNA, the ATP-dependent uptake of single-stranded DNA by duplex DNA, and the ATP-dependent hybridization of homologous single-stranded DNAs. It interacts with LexA causing its activation and leading to its autocatalytic cleavage. In Pectobacterium carotovorum subsp. carotovorum (strain PC1), this protein is Protein RecA.